The sequence spans 264 residues: Thymidylate synthase (264 aa).

Position 21 (arginine 21) interacts with dUMP. Residue histidine 51 coordinates (6R)-5,10-methylene-5,6,7,8-tetrahydrofolate. A dUMP-binding site is contributed by 126 to 127 (RR). The active-site Nucleophile is cysteine 146. DUMP-binding positions include 166–169 (RSCD), asparagine 177, and 207–209 (HLY). A (6R)-5,10-methylene-5,6,7,8-tetrahydrofolate-binding site is contributed by aspartate 169. (6R)-5,10-methylene-5,6,7,8-tetrahydrofolate is bound at residue alanine 263.

This sequence belongs to the thymidylate synthase family. Bacterial-type ThyA subfamily. As to quaternary structure, homodimer.

It localises to the cytoplasm. The catalysed reaction is dUMP + (6R)-5,10-methylene-5,6,7,8-tetrahydrofolate = 7,8-dihydrofolate + dTMP. Its pathway is pyrimidine metabolism; dTTP biosynthesis. In terms of biological role, catalyzes the reductive methylation of 2'-deoxyuridine-5'-monophosphate (dUMP) to 2'-deoxythymidine-5'-monophosphate (dTMP) while utilizing 5,10-methylenetetrahydrofolate (mTHF) as the methyl donor and reductant in the reaction, yielding dihydrofolate (DHF) as a by-product. This enzymatic reaction provides an intracellular de novo source of dTMP, an essential precursor for DNA biosynthesis. This is Thymidylate synthase from Salmonella typhimurium (strain LT2 / SGSC1412 / ATCC 700720).